Here is a 150-residue protein sequence, read N- to C-terminus: Putative HTH-type transcriptional regulator HI_0379 (150 aa).

The region spanning 2–131 (KLTSKGRYAV…NEITLAELVN (130 aa)) is the HTH rrf2-type domain.

In Haemophilus influenzae (strain ATCC 51907 / DSM 11121 / KW20 / Rd), this protein is Putative HTH-type transcriptional regulator HI_0379.